Consider the following 176-residue polypeptide: 3-hydroxyanthranilate 3,4-dioxygenase (176 aa).

Arginine 44 provides a ligand contact to O2. Positions 48, 54, and 92 each coordinate Fe cation. Residue glutamate 54 participates in substrate binding. Positions 96 and 106 each coordinate substrate. Positions 121, 124, 158, and 161 each coordinate Fe cation.

Belongs to the 3-HAO family. As to quaternary structure, homodimer. Fe(2+) serves as cofactor.

It catalyses the reaction 3-hydroxyanthranilate + O2 = (2Z,4Z)-2-amino-3-carboxymuconate 6-semialdehyde. Its pathway is cofactor biosynthesis; NAD(+) biosynthesis; quinolinate from L-kynurenine: step 3/3. Catalyzes the oxidative ring opening of 3-hydroxyanthranilate to 2-amino-3-carboxymuconate semialdehyde, which spontaneously cyclizes to quinolinate. The protein is 3-hydroxyanthranilate 3,4-dioxygenase of Xanthomonas oryzae pv. oryzae (strain MAFF 311018).